A 500-amino-acid polypeptide reads, in one-letter code: L-arabinose isomerase (500 aa).

Mn(2+)-binding residues include Glu-306, Glu-333, His-350, and His-450.

Belongs to the arabinose isomerase family. As to quaternary structure, homohexamer. The cofactor is Mn(2+).

The catalysed reaction is beta-L-arabinopyranose = L-ribulose. It functions in the pathway carbohydrate degradation; L-arabinose degradation via L-ribulose; D-xylulose 5-phosphate from L-arabinose (bacterial route): step 1/3. Its function is as follows. Catalyzes the conversion of L-arabinose to L-ribulose. In Shigella flexneri, this protein is L-arabinose isomerase.